Consider the following 192-residue polypeptide: Fe/S biogenesis protein NfuA (192 aa).

Residues cysteine 149 and cysteine 152 each coordinate [4Fe-4S] cluster.

It belongs to the NfuA family. In terms of assembly, homodimer. [4Fe-4S] cluster is required as a cofactor.

Its function is as follows. Involved in iron-sulfur cluster biogenesis. Binds a 4Fe-4S cluster, can transfer this cluster to apoproteins, and thereby intervenes in the maturation of Fe/S proteins. Could also act as a scaffold/chaperone for damaged Fe/S proteins. This is Fe/S biogenesis protein NfuA from Shewanella putrefaciens (strain CN-32 / ATCC BAA-453).